We begin with the raw amino-acid sequence, 395 residues long: Elongation factor Tu (395 aa).

A tr-type G domain is found at 10-204; that stretch reads KPHVNIGTIG…AVDSYIPTPE (195 aa). The interval 19–26 is G1; sequence GHVDHGKT. Residue 19–26 participates in GTP binding; sequence GHVDHGKT. Residue threonine 26 participates in Mg(2+) binding. The segment at 60-64 is G2; it reads GITIS. The segment at 81–84 is G3; it reads DCPG. Residues 81–85 and 136–139 each bind GTP; these read DCPGH and NKCD. The tract at residues 136 to 139 is G4; the sequence is NKCD. The segment at 174-176 is G5; it reads SAL.

The protein belongs to the TRAFAC class translation factor GTPase superfamily. Classic translation factor GTPase family. EF-Tu/EF-1A subfamily. In terms of assembly, monomer.

The protein resides in the cytoplasm. It carries out the reaction GTP + H2O = GDP + phosphate + H(+). GTP hydrolase that promotes the GTP-dependent binding of aminoacyl-tRNA to the A-site of ribosomes during protein biosynthesis. In Listeria monocytogenes serotype 4b (strain CLIP80459), this protein is Elongation factor Tu.